Consider the following 341-residue polypeptide: N-acetyl-gamma-glutamyl-phosphate reductase (341 aa).

Residue C148 is part of the active site.

Belongs to the NAGSA dehydrogenase family. Type 1 subfamily.

It is found in the cytoplasm. It carries out the reaction N-acetyl-L-glutamate 5-semialdehyde + phosphate + NADP(+) = N-acetyl-L-glutamyl 5-phosphate + NADPH + H(+). Its pathway is amino-acid biosynthesis; L-arginine biosynthesis; N(2)-acetyl-L-ornithine from L-glutamate: step 3/4. In terms of biological role, catalyzes the NADPH-dependent reduction of N-acetyl-5-glutamyl phosphate to yield N-acetyl-L-glutamate 5-semialdehyde. The polypeptide is N-acetyl-gamma-glutamyl-phosphate reductase (Pseudothermotoga lettingae (strain ATCC BAA-301 / DSM 14385 / NBRC 107922 / TMO) (Thermotoga lettingae)).